The chain runs to 214 residues: uncharacterized protein (214 aa).

Residues 2-118 (KIVIADDHHV…ELVKTRQVHG (117 aa)) form the Response regulatory domain. At aspartate 53 the chain carries 4-aspartylphosphate. Residues 142–207 (EKEKYYQLTR…QAALFAVKYN (66 aa)) form the HTH luxR-type domain. Residues 166-185 (NKEIAAALFISEKTVKTHVS) constitute a DNA-binding region (H-T-H motif).

Post-translationally, phosphorylated by YhcY.

Its subcellular location is the cytoplasm. In terms of biological role, member of the two-component regulatory system YhcY/YhcZ. This is an uncharacterized protein from Bacillus subtilis (strain 168).